Consider the following 142-residue polypeptide: Hemoglobin subunit alpha-A (142 aa).

Positions 2 to 142 (VLSANDKTNV…VGNVLTAKYR (141 aa)) constitute a Globin domain. His59 is an O2 binding site. Position 88 (His88) interacts with heme b.

The protein belongs to the globin family. Heterotetramer of two alpha chains and two beta chains. As to expression, red blood cells.

Involved in oxygen transport from the lung to the various peripheral tissues. In Aquila chrysaetos (Golden eagle), this protein is Hemoglobin subunit alpha-A (HBAA).